The following is a 543-amino-acid chain: Cytochrome P450 1B1 (543 aa).

Cysteine 470 contributes to the heme binding site.

It belongs to the cytochrome P450 family. Heme serves as cofactor. As to expression, constitutively expressed in retinal and kidney pericytes cells. Expressed in retinal endothelial cells (at protein level). Expressed in cardiac, pulmonary and aortic endothelial cells. Constitutively expressed in trabecular meshwork of the eye (at protein level).

Its subcellular location is the endoplasmic reticulum membrane. It localises to the microsome membrane. The protein localises to the mitochondrion. The catalysed reaction is an organic molecule + reduced [NADPH--hemoprotein reductase] + O2 = an alcohol + oxidized [NADPH--hemoprotein reductase] + H2O + H(+). The enzyme catalyses 17beta-estradiol + reduced [NADPH--hemoprotein reductase] + O2 = 2-hydroxy-17beta-estradiol + oxidized [NADPH--hemoprotein reductase] + H2O + H(+). It carries out the reaction 17beta-estradiol + reduced [NADPH--hemoprotein reductase] + O2 = 4-hydroxy-17beta-estradiol + oxidized [NADPH--hemoprotein reductase] + H2O + H(+). It catalyses the reaction estrone + reduced [NADPH--hemoprotein reductase] + O2 = 2-hydroxyestrone + oxidized [NADPH--hemoprotein reductase] + H2O + H(+). The catalysed reaction is estrone + reduced [NADPH--hemoprotein reductase] + O2 = 4-hydroxyestrone + oxidized [NADPH--hemoprotein reductase] + H2O + H(+). The enzyme catalyses testosterone + reduced [NADPH--hemoprotein reductase] + O2 = 6beta,17beta-dihydroxyandrost-4-en-3-one + oxidized [NADPH--hemoprotein reductase] + H2O + H(+). It carries out the reaction progesterone + reduced [NADPH--hemoprotein reductase] + O2 = 6beta-hydroxyprogesterone + oxidized [NADPH--hemoprotein reductase] + H2O + H(+). It catalyses the reaction progesterone + reduced [NADPH--hemoprotein reductase] + O2 = 16alpha-hydroxyprogesterone + oxidized [NADPH--hemoprotein reductase] + H2O + H(+). The catalysed reaction is all-trans-retinol + reduced [NADPH--hemoprotein reductase] + O2 = all-trans-retinal + oxidized [NADPH--hemoprotein reductase] + 2 H2O + H(+). The enzyme catalyses all-trans-retinal + reduced [NADPH--hemoprotein reductase] + O2 = all-trans-retinoate + oxidized [NADPH--hemoprotein reductase] + H2O + 2 H(+). It carries out the reaction (5Z,8Z,11Z,14Z)-eicosatetraenoate + reduced [NADPH--hemoprotein reductase] + O2 = (8R,9S)-epoxy-(5Z,11Z,14Z)-eicosatrienoate + oxidized [NADPH--hemoprotein reductase] + H2O + H(+). It catalyses the reaction (5Z,8Z,11Z,14Z)-eicosatetraenoate + reduced [NADPH--hemoprotein reductase] + O2 = (11R,12S)-epoxy-(5Z,8Z,14Z)-eicosatrienoate + oxidized [NADPH--hemoprotein reductase] + H2O + H(+). The catalysed reaction is (5Z,8Z,11Z,14Z)-eicosatetraenoate + reduced [NADPH--hemoprotein reductase] + O2 = (11S,12R)-epoxy-(5Z,8Z,14Z)-eicosatrienoate + oxidized [NADPH--hemoprotein reductase] + H2O + H(+). The enzyme catalyses (5Z,8Z,11Z,14Z)-eicosatetraenoate + reduced [NADPH--hemoprotein reductase] + O2 = (14R,15S)-epoxy-(5Z,8Z,11Z)-eicosatrienoate + oxidized [NADPH--hemoprotein reductase] + H2O + H(+). It carries out the reaction (5S)-hydroperoxy-(6E,8Z,11Z,14Z)-eicosatetraenoate = 5-oxo-(6E,8Z,11Z,14Z)-eicosatetraenoate + H2O. It catalyses the reaction (12S)-hydroperoxy-(5Z,8Z,10E,14Z)-eicosatetraenoate = 12-oxo-(5Z,8Z,10E,14Z)-eicosatetraenoate + H2O. The catalysed reaction is (13S)-hydroperoxy-(9Z,11E)-octadecadienoate = 13-oxo-(9Z,11E)-octadecadienoate + H2O. The enzyme catalyses (15S)-hydroperoxy-(5Z,8Z,11Z,13E)-eicosatetraenoate = 15-oxo-(5Z,8Z,11Z,13E)-eicosatetraenoate + H2O. Its pathway is steroid hormone biosynthesis. It participates in cofactor metabolism; retinol metabolism. The protein operates within lipid metabolism; arachidonate metabolism. Its activity is regulated as follows. Enzyme activity is increased by cytochrome b5. Enzyme activity is increased by liposomes containing anionic phospholipids, phosphatidic acid and cardiolipin. Inhibited by naringenin with an IC(50) of 5 uM. A cytochrome P450 monooxygenase involved in the metabolism of various endogenous substrates, including fatty acids, steroid hormones and vitamins. Mechanistically, uses molecular oxygen inserting one oxygen atom into a substrate, and reducing the second into a water molecule, with two electrons provided by NADPH via cytochrome P450 reductase (NADPH--hemoprotein reductase). Exhibits catalytic activity for the formation of hydroxyestrogens from 17beta-estradiol (E2), namely 2- and 4-hydroxy E2. Metabolizes testosterone and progesterone to B or D ring hydroxylated metabolites. May act as a major enzyme for all-trans retinoic acid biosynthesis in extrahepatic tissues. Catalyzes two successive oxidative transformation of all-trans retinol to all-trans retinal and then to the active form all-trans retinoic acid. Catalyzes the epoxidation of double bonds of certain PUFA. Converts arachidonic acid toward epoxyeicosatrienoic acid (EpETrE) regioisomers, 8,9-, 11,12-, and 14,15- EpETrE, that function as lipid mediators in the vascular system. Additionally, displays dehydratase activity toward oxygenated eicosanoids hydroperoxyeicosatetraenoates (HpETEs). This activity is independent of cytochrome P450 reductase, NADPH, and O2. Also involved in the oxidative metabolism of xenobiotics, particularly converting polycyclic aromatic hydrocarbons and heterocyclic aryl amines procarcinogens to DNA-damaging products. Plays an important role in retinal vascular development. Under ambient/hyperoxic O2 conditions, promotes angiogenesis and capillary morphogenesis of retinal endothelial cells and pericytes, likely by metabolizing the oxygenated products symptomatic of oxidative stress. Also, contributes to oxidative homeostasis and ultrastructural organization and function of trabecular meshwork tissue through modulation of POSTN expression. The protein is Cytochrome P450 1B1 of Mus musculus (Mouse).